Reading from the N-terminus, the 541-residue chain is Cytochrome bc1 complex cytochrome b subunit (541 aa).

The helical transmembrane segment at Phe-36–Leu-56 threads the bilayer. Heme contacts are provided by His-105 and His-119. 3 helical membrane passes run Ala-109–Phe-129, Trp-137–Leu-157, and Ile-169–Phe-189. His-206 and His-221 together coordinate heme. The next 5 helical transmembrane spans lie at Val-207 to Tyr-227, Ser-256 to Ile-276, Val-325 to Ile-345, Leu-371 to Trp-391, and Ile-408 to Leu-428.

It belongs to the cytochrome b family. As to quaternary structure, the cytochrome bc1 complex is composed of a cytochrome b (QcrB), the Rieske protein iron-sulfur (QcrA) and a diheme cytochrome c (QcrC) subunit. Heme is required as a cofactor.

Its subcellular location is the cell membrane. The enzyme catalyses a quinol + 2 Fe(III)-[cytochrome c](out) = a quinone + 2 Fe(II)-[cytochrome c](out) + 2 H(+)(out). Cytochrome b subunit of the cytochrome bc1 complex, an essential component of the respiratory electron transport chain required for ATP synthesis. The bc1 complex catalyzes the oxidation of menaquinol and the reduction of cytochrome c in the respiratory chain. The bc1 complex operates through a Q-cycle mechanism that couples electron transfer to generation of the proton gradient that drives ATP synthesis. The chain is Cytochrome bc1 complex cytochrome b subunit (qcrB) from Corynebacterium efficiens (strain DSM 44549 / YS-314 / AJ 12310 / JCM 11189 / NBRC 100395).